A 333-amino-acid chain; its full sequence is Ketol-acid reductoisomerase (NAD(P)(+)) (333 aa).

The region spanning 2–182 (AKIYYDEDAS…GATRAGVIET (181 aa)) is the KARI N-terminal Rossmann domain. NADP(+) contacts are provided by residues 25 to 28 (YGSQ), Ser-51, and 83 to 86 (DTVQ). The active site involves His-108. Gly-134 contacts NADP(+). A KARI C-terminal knotted domain is found at 183-327 (TFREETETDL…KELRQMMPWL (145 aa)). Mg(2+) contacts are provided by Asp-191, Glu-195, Glu-227, and Glu-231. Position 252 (Ser-252) interacts with substrate.

The protein belongs to the ketol-acid reductoisomerase family. It depends on Mg(2+) as a cofactor.

It carries out the reaction (2R)-2,3-dihydroxy-3-methylbutanoate + NAD(+) = (2S)-2-acetolactate + NADH + H(+). The enzyme catalyses (2R)-2,3-dihydroxy-3-methylbutanoate + NADP(+) = (2S)-2-acetolactate + NADPH + H(+). The protein operates within amino-acid biosynthesis; L-isoleucine biosynthesis; L-isoleucine from 2-oxobutanoate: step 2/4. It functions in the pathway amino-acid biosynthesis; L-valine biosynthesis; L-valine from pyruvate: step 2/4. Involved in the biosynthesis of branched-chain amino acids (BCAA). Catalyzes an alkyl-migration followed by a ketol-acid reduction of (S)-2-acetolactate (S2AL) to yield (R)-2,3-dihydroxy-isovalerate. In the isomerase reaction, S2AL is rearranged via a Mg-dependent methyl migration to produce 3-hydroxy-3-methyl-2-ketobutyrate (HMKB). In the reductase reaction, this 2-ketoacid undergoes a metal-dependent reduction by NADPH or NADH to yield (R)-2,3-dihydroxy-isovalerate. In Hydrogenobaculum sp. (strain Y04AAS1), this protein is Ketol-acid reductoisomerase (NAD(P)(+)).